We begin with the raw amino-acid sequence, 340 residues long: Large ribosomal subunit protein uL29m (340 aa).

Positions 1–10 (MIRSLHTSAV) are enriched in polar residues. Residues 1-22 (MIRSLHTSAVRQGRKKWPKPLP) form a disordered region.

Belongs to the universal ribosomal protein uL29 family. As to quaternary structure, component of the mitochondrial large ribosomal subunit. Mature mitochondrial ribosomes consist of a small (37S) and a large (54S) subunit. The 37S subunit contains at least 33 different proteins and 1 molecule of RNA (15S). The 54S subunit contains at least 45 different proteins and 1 molecule of RNA (21S).

The protein localises to the mitochondrion. In Yarrowia lipolytica (strain CLIB 122 / E 150) (Yeast), this protein is Large ribosomal subunit protein uL29m (MRPL4).